The sequence spans 535 residues: MAKRVAIVGAGVSGLASIKCCLEEGLEPTCFERSDDLGGLWRFTEHVEEGRASLYKSVVSNSCKEMSCYSDFPFPEDYPNYVPNSQFLDYLKMYADRFSLLKSIQFKTTVFSITKCQDFNVSGQWEVVTLHEGKQESAIFDAVMVCTGFLTNPHLPLGCFPGIKTFKGQYFHSRQYKHPDIFKDKRVLVVGMGNSGTDIAVEASHVAKKVFLSTTGGAWVISRVFDSGYPWDMVFTTRFQNFIRNSLPTPIVTWLVAKKMNSWFNHANYGLVPKDRIQLKEPVLNDELPGRIITGKVFIRPSIKEVKENSVVFGNAHNTPSEEPIDVIVFATGYTFAFPFLDESVVKVEDGQASLYKYIFPAHLQKPTLAVIGLIKPLGSMLPTGETQARYTVQVFKGVIKLPPTSVMIKEVNERKENKHNGFGLCYCKALQADYITYIDDLLTSINAKPNLFSLLLTDPLLALTMFFGPYSPYQFRLTGPGKWKGARNAIMTQWDRTFKVTKTRIVQESSSPFESLLKLFAVLALLVSVFLIFL.

At alanine 2 the chain carries N-acetylalanine. The Lumenal segment spans residues 2 to 513; the sequence is AKRVAIVGAG…TRIVQESSSP (512 aa). FAD is bound by residues 9 to 13, glutamate 32, 40 to 41, and 61 to 62; these read GAGVS, LW, and NS. NADP(+) contacts are provided by residues 60 to 61 and 195 to 198; these read SN and SGTD. A helical transmembrane segment spans residues 514–534; sequence FESLLKLFAVLALLVSVFLIF. Leucine 535 is a topological domain (cytoplasmic).

This sequence belongs to the FMO family. Requires FAD as cofactor. In terms of tissue distribution, liver.

Its subcellular location is the endoplasmic reticulum membrane. It catalyses the reaction hypotaurine + NADPH + O2 + H(+) = taurine + NADP(+) + H2O. The catalysed reaction is hypotaurine + NADH + O2 + H(+) = taurine + NAD(+) + H2O. It carries out the reaction trimethylamine + NADPH + O2 = trimethylamine N-oxide + NADP(+) + H2O. The enzyme catalyses N,N-dimethylaniline + NADPH + O2 + H(+) = N,N-dimethylaniline N-oxide + NADP(+) + H2O. Broad spectrum monooxygenase that catalyzes the oxygenation of a wide variety of nitrogen- and sulfur-containing compounds including xenobiotics. Catalyzes the S-oxygenation of hypotaurine to produce taurine, an organic osmolyte involved in cell volume regulation as well as a variety of cytoprotective and developmental processes. In vitro, catalyzes the N-oxygenation of trimethylamine (TMA) to produce trimethylamine N-oxide (TMAO) and could therefore participate to the detoxification of this compound that is generated by the action of gut microbiota from dietary precursors such as choline, choline containing compounds, betaine or L-carnitine. The polypeptide is Flavin-containing monooxygenase 1 (FMO1) (Oryctolagus cuniculus (Rabbit)).